Consider the following 239-residue polypeptide: Protein GrpE (239 aa).

Disordered regions lie at residues methionine 1–glutamate 50 and methionine 209–valine 239. Positions valine 16 to alanine 30 are enriched in polar residues. Positions glutamate 218–valine 239 are enriched in acidic residues.

Belongs to the GrpE family. Homodimer.

The protein resides in the cytoplasm. Its function is as follows. Participates actively in the response to hyperosmotic and heat shock by preventing the aggregation of stress-denatured proteins, in association with DnaK and GrpE. It is the nucleotide exchange factor for DnaK and may function as a thermosensor. Unfolded proteins bind initially to DnaJ; upon interaction with the DnaJ-bound protein, DnaK hydrolyzes its bound ATP, resulting in the formation of a stable complex. GrpE releases ADP from DnaK; ATP binding to DnaK triggers the release of the substrate protein, thus completing the reaction cycle. Several rounds of ATP-dependent interactions between DnaJ, DnaK and GrpE are required for fully efficient folding. This chain is Protein GrpE, found in Prochlorococcus marinus (strain MIT 9312).